A 90-amino-acid polypeptide reads, in one-letter code: Large ribosomal subunit protein uL16c (90 aa).

The protein belongs to the universal ribosomal protein uL16 family. As to quaternary structure, part of the 50S ribosomal subunit.

It localises to the plastid. The protein localises to the chloroplast. The protein is Large ribosomal subunit protein uL16c (rpl16) of Oenothera ammophila (Evening primerose).